A 549-amino-acid polypeptide reads, in one-letter code: Eukaryotic translation initiation factor 4B2 (549 aa).

Disordered regions lie at residues 1-446 (MSKP…DLIR) and 465-549 (FRPR…REGW). Over residues 24-46 (AEATATAADSQSFPSLKEAATAK) the composition is skewed to low complexity. Composition is skewed to gly residues over residues 96–109 (RLGG…GGRS) and 126–136 (SWGGGGGGRRS). The Nuclear localization signal 1 motif lies at 169 to 176 (GKKSLPSF). The span at 184–218 (RYGGGGGSFGGGGGGGAGSYGGGGAGAGSGGGGGF) shows a compositional bias: gly residues. The Nuclear localization signal 2 motif lies at 234-241 (SSTFGSGF). Residues 263-278 (QEERRRLVFEPRKADT) are compositionally biased toward basic and acidic residues. The span at 281 to 292 (SETPTAVKTSKP) shows a compositional bias: polar residues. Residues 299–323 (RPREQVLAEKGLDWKKLDSDIEAKK) show a composition bias toward basic and acidic residues. Positions 327–349 (SRPSSAQSSRPSSAQSNRSESSA) are enriched in low complexity. 3 stretches are compositionally biased toward basic and acidic residues: residues 369–431 (AKPR…KESQ), 485–507 (ERPH…ERPR), and 518–549 (PVDD…REGW).

The protein belongs to the eIF-4 subunit B family. As to quaternary structure, homodimer. Nonspherical monomer. mRNA-discriminating component of initiation complexes. Phosphorylated.

The protein resides in the nucleus. Promotes the eIF4F and eIF4A RNA-dependent ATP-hydrolysis activity with different efficiency depending on mRNAs, thus providing mRNA discrimination during initiation of translation. This Arabidopsis thaliana (Mouse-ear cress) protein is Eukaryotic translation initiation factor 4B2.